Reading from the N-terminus, the 279-residue chain is MASSASSLHFLSLTPQTLLLPKPTSQTTSLSFFSLPPSSLNLSLSSPSSCFSSRFVRKVTLPDFDQIEDVEDGDEGVEEERNFSPDLKIFVGNLLFSADSAALAELFERAGNVEMVEVIYDKLTGRSRGFGFVTMSSKEEVEAACQQFNGYELDGRALRVNSGPPPEKRENSSFRENSSFRGGSRGGGSFDSSNRVYVGNLAWGVDQDALETLFSEQGKVVDAKVVYDRDSGRSRGFGFVTYSSAEEVNNAIESLDGVDLNGRAIRVSPAEARPPRRQF.

Positions 87-165 constitute an RRM 1 domain; it reads LKIFVGNLLF…RALRVNSGPP (79 aa). A disordered region spans residues 156–187; the sequence is RALRVNSGPPPEKRENSSFRENSSFRGGSRGG. Positions 166–193 are linker (Gly-rich); sequence PEKRENSSFRENSSFRGGSRGGGSFDSS. The RRM 2 domain occupies 194–272; that stretch reads NRVYVGNLAW…RAIRVSPAEA (79 aa).

As to expression, expressed at high levels in the leaves and seedlings, and lower levels are seen in the stems and roots.

The protein resides in the plastid. It localises to the chloroplast. In terms of biological role, could be involved in splicing and/or processing of chloroplast RNA's. The polypeptide is 30 kDa ribonucleoprotein, chloroplastic (Nicotiana plumbaginifolia (Leadwort-leaved tobacco)).